Here is a 181-residue protein sequence, read N- to C-terminus: uncharacterized protein (181 aa).

This is an uncharacterized protein from Homo sapiens (Human).